The primary structure comprises 387 residues: Acyltransferase MdmB (387 aa).

10 helical membrane-spanning segments follow: residues 8-28, 45-65, 85-105, 139-161, 170-190, 209-229, 236-256, 258-278, 292-312, and 336-356; these read LPSL…CHIA, ITTL…FVLA, IYPL…SLAE, TPSW…YRLV, WWCA…TSQF, CWLP…ALIL, GPGV…TQVV, PMFT…TALA, AVLV…FMVI, and ALAL…HTVV.

It belongs to the acyltransferase 3 family.

The protein resides in the cell membrane. In terms of biological role, catalyzes the acylation of the mycaminose sugar during midecamycin biosynthesis. The sequence is that of Acyltransferase MdmB (mdmB) from Streptomyces mycarofaciens.